The chain runs to 522 residues: Target of rapamycin complex 2 subunit MAPKAP1 (522 aa).

An N-acetylalanine modification is found at Ala2. An interaction with MAP3K2 region spans residues 2–184 (AFLDNPTIIL…KKIDVYLPLH (183 aa)). Residues 2-267 (AFLDNPTIIL…GFSTLALVEK (266 aa)) form an interaction with NBN region. A disordered region spans residues 38 to 59 (LEKTHPPSVPGDSGSEVQGSSG). Position 86 is a phosphothreonine; by PKB/AKT1 and RPS6KB1 (Thr86). Residue Ser128 is modified to Phosphoserine; by PKC. Residues 139–267 (QSILSVRLEQ…GFSTLALVEK (129 aa)) enclose the CRIM domain. Phosphoserine occurs at positions 186, 315, and 356. The SIN1-type RBD stretch occupies residues 279-353 (LFVRINAAHG…QNAWEFCLVR (75 aa)). The SIN1-type PH domain maps to 382 to 487 (HYKSFKVSMI…IVLKVNYILE (106 aa)). Arg393 contacts a 1,2-diacyl-sn-glycero-3-phospho-(1D-myo-inositol-3,4,5-trisphosphate). A Phosphothreonine; by RPS6KB1 modification is found at Thr398. A 1,2-diacyl-sn-glycero-3-phospho-(1D-myo-inositol-3,4,5-trisphosphate)-binding residues include Lys428 and Lys464. Residues 468–522 (FESDAATVSEIVLKVNYILESRASTARADYLAQKQRKLNRRTSFSFQKEKKSGQQ) form an interaction with ATF2 region. Ser510 bears the Phosphoserine mark.

Belongs to the SIN1 family. Component of the mechanistic target of rapamycin complex 2 (mTORC2), consisting in two heterotretramers composed of MTOR, MLST8, RICTOR and MAPKAP1/SIN1. The mTORC2 core complex associates with PRR5/PROTOR1 and/or PRR5L/PROTOR2. Contrary to mTORC1, mTORC2 does not bind to and is not sensitive to FKBP12-rapamycin. Interacts with MAP3K2. Interacts with ATF2. Interacts with MAPK8. Interacts with GTP-bound HRAS and KRAS; inhibiting their activity. Interacts with IFNAR2. Post-translationally, phosphorylation at Ser-128 by PKC promotes relocalization to the perinuclear region, where the mTORC2 complex specifically mediates phosphorylation of SGK1. Phosphorylated at Thr-86 by AKT1 or RPS6KB1 in the presence of growth factors; the effect of this phosphorylation is however unclear. According to two studies, phosphorylation at Thr-86 by AKT1 is part of a positive feedback loop that increases mTORC2 activation. According to another study, phosphorylation at Thr-86 and Thr-398 by RPS6KB1 promotes dissociation from the mTORC2 complex, leading to inhibit mTORC2 signaling. Uniquitously expressed, with highest levels in testis, kidney and liver. Present in renal tubule cells (at protein level).

The protein resides in the cell membrane. Its subcellular location is the endoplasmic reticulum membrane. It is found in the early endosome membrane. The protein localises to the late endosome membrane. It localises to the lysosome membrane. The protein resides in the golgi apparatus membrane. Its subcellular location is the mitochondrion outer membrane. It is found in the cytoplasm. The protein localises to the perinuclear region. It localises to the nucleus. With respect to regulation, phosphatidylinositol 3,4,5-trisphosphate (PI(3,4,5)P3) promotes MTOR activation by relieving MAPKAP1/SIN1-mediated inhibition of MTOR that takes place in absence of PI(3,4,5)P3. In terms of biological role, component of the mechanistic target of rapamycin complex 2 (mTORC2), which transduces signals from growth factors to pathways involved in proliferation, cytoskeletal organization, lipogenesis and anabolic output. In response to growth factors, mTORC2 phosphorylates and activates AGC protein kinase family members, including AKT (AKT1, AKT2 and AKT3), PKC (PRKCA, PRKCB and PRKCE) and SGK1. In contrast to mTORC1, mTORC2 is nutrient-insensitive. Within the mTORC2 complex, MAPKAP1/SIN1 acts as a substrate adapter which recognizes and binds AGC protein kinase family members for phosphorylation by MTOR. mTORC2 plays a critical role in AKT1 activation by mediating phosphorylation of different sites depending on the context, such as 'Thr-450', 'Ser-473', 'Ser-477' or 'Thr-479', facilitating the phosphorylation of the activation loop of AKT1 on 'Thr-308' by PDPK1/PDK1 which is a prerequisite for full activation. mTORC2 catalyzes the phosphorylation of SGK1 at 'Ser-422' and of PRKCA on 'Ser-657'. The mTORC2 complex also phosphorylates various proteins involved in insulin signaling, such as FBXW8 and IGF2BP1. mTORC2 acts upstream of Rho GTPases to regulate the actin cytoskeleton, probably by activating one or more Rho-type guanine nucleotide exchange factors. mTORC2 promotes the serum-induced formation of stress-fibers or F-actin. MAPKAP1 inhibits MAP3K2 by preventing its dimerization and autophosphorylation. Inhibits HRAS and KRAS independently of mTORC2 complex. Enhances osmotic stress-induced phosphorylation of ATF2 and ATF2-mediated transcription. Involved in ciliogenesis, regulates cilia length through its interaction with CCDC28B independently of mTORC2 complex. The sequence is that of Target of rapamycin complex 2 subunit MAPKAP1 from Mus musculus (Mouse).